A 347-amino-acid polypeptide reads, in one-letter code: NADH-quinone oxidoreductase subunit H (347 aa).

Helical transmembrane passes span 13–33 (LIIALKSVVLLVVLLIVVAYL), 82–102 (GVFLLAPFIFAVLAMATWAVI), 115–135 (VGILYIFAISSLEVYGVIMGG), 161–181 (IGFVIVTVLLTVGSLNLTDIV), 198–218 (FLDWNWLCLFPMFVVFFISAL), 248–268 (FLLFFLGEYVAITLMCALMTV), 286–306 (VPGIIWFMLKLCFCFFLFAMV), and 325–345 (VFLPISLFMVVATATFLKVFG).

Belongs to the complex I subunit 1 family. As to quaternary structure, NDH-1 is composed of 14 different subunits. Subunits NuoA, H, J, K, L, M, N constitute the membrane sector of the complex.

Its subcellular location is the cell inner membrane. It catalyses the reaction a quinone + NADH + 5 H(+)(in) = a quinol + NAD(+) + 4 H(+)(out). In terms of biological role, NDH-1 shuttles electrons from NADH, via FMN and iron-sulfur (Fe-S) centers, to quinones in the respiratory chain. The immediate electron acceptor for the enzyme in this species is believed to be ubiquinone. Couples the redox reaction to proton translocation (for every two electrons transferred, four hydrogen ions are translocated across the cytoplasmic membrane), and thus conserves the redox energy in a proton gradient. This subunit may bind ubiquinone. The polypeptide is NADH-quinone oxidoreductase subunit H (Brucella melitensis biotype 1 (strain ATCC 23456 / CCUG 17765 / NCTC 10094 / 16M)).